The following is a 1015-amino-acid chain: Putative helicase mov-10-B.2 (1015 aa).

Residues 94–130 are disordered; sequence QWFRPRRRQQNQANATPGNVSSVTPSSDQGPSCPESG. Polar residues predominate over residues 109–123; that stretch reads TPGNVSSVTPSSDQG. 555–562 is an ATP binding site; sequence GPPGTGKT. The DEAG box motif lies at 677–680; it reads DEAG.

It belongs to the DNA2/NAM7 helicase family. SDE3 subfamily.

Its subcellular location is the cytoplasm. The protein localises to the P-body. It carries out the reaction ATP + H2O = ADP + phosphate + H(+). Functionally, probable RNA helicase. Required for RNA-mediated gene silencing by the RNA-induced silencing complex (RISC). Required for both miRNA-mediated translational repression and miRNA-mediated cleavage of complementary mRNAs by RISC. In Danio rerio (Zebrafish), this protein is Putative helicase mov-10-B.2 (mov10b.2).